The following is a 100-amino-acid chain: Urease subunit gamma (100 aa).

This sequence belongs to the urease gamma subunit family. In terms of assembly, heterotrimer of UreA (gamma), UreB (beta) and UreC (alpha) subunits. Three heterotrimers associate to form the active enzyme.

The protein resides in the cytoplasm. It catalyses the reaction urea + 2 H2O + H(+) = hydrogencarbonate + 2 NH4(+). It functions in the pathway nitrogen metabolism; urea degradation; CO(2) and NH(3) from urea (urease route): step 1/1. This is Urease subunit gamma from Blochmanniella floridana.